The chain runs to 431 residues: Glutamate-1-semialdehyde 2,1-aminomutase (431 aa).

Lys-265 carries the post-translational modification N6-(pyridoxal phosphate)lysine.

Belongs to the class-III pyridoxal-phosphate-dependent aminotransferase family. HemL subfamily. In terms of assembly, homodimer. Pyridoxal 5'-phosphate serves as cofactor.

Its subcellular location is the cytoplasm. The catalysed reaction is (S)-4-amino-5-oxopentanoate = 5-aminolevulinate. It participates in porphyrin-containing compound metabolism; protoporphyrin-IX biosynthesis; 5-aminolevulinate from L-glutamyl-tRNA(Glu): step 2/2. The polypeptide is Glutamate-1-semialdehyde 2,1-aminomutase (Aliivibrio salmonicida (strain LFI1238) (Vibrio salmonicida (strain LFI1238))).